The sequence spans 320 residues: Sucrose operon repressor (320 aa).

Residues 1-55 (MKNIADIAKIAGVSKSTVSRYLNNGSVSLKTQQKLDEIIRENDYQPNQFAQSLRA) enclose the HTH lacI-type domain. The H-T-H motif DNA-binding region spans 4 to 23 (IADIAKIAGVSKSTVSRYLN).

In terms of biological role, negative regulator of scrB expression. This is Sucrose operon repressor (scrR) from Staphylococcus xylosus.